Reading from the N-terminus, the 45-residue chain is MADKPNMTEITSFDKTKLRKTETQEKNPLPTKETIEQERQGESTP.

Residues 1-45 (MADKPNMTEITSFDKTKLRKTETQEKNPLPTKETIEQERQGESTP) are disordered. 2 stretches are compositionally biased toward basic and acidic residues: residues 12-25 (SFDK…ETQE) and 33-45 (ETIE…ESTP).

This sequence belongs to the thymosin beta family.

The protein resides in the cytoplasm. It localises to the cytoskeleton. In terms of biological role, plays an important role in the organization of the cytoskeleton. Binds to and sequesters actin monomers (G actin) and therefore inhibits actin polymerization. The sequence is that of Thymosin beta (tmsb) from Danio rerio (Zebrafish).